The sequence spans 100 residues: Large ribosomal subunit protein eL14 (100 aa).

It belongs to the eukaryotic ribosomal protein eL14 family.

The protein is Large ribosomal subunit protein eL14 of Aeropyrum pernix (strain ATCC 700893 / DSM 11879 / JCM 9820 / NBRC 100138 / K1).